A 160-amino-acid polypeptide reads, in one-letter code: Ribosome maturation factor RimP (160 aa).

It belongs to the RimP family.

The protein localises to the cytoplasm. Required for maturation of 30S ribosomal subunits. The polypeptide is Ribosome maturation factor RimP (Geobacter sp. (strain M21)).